The chain runs to 451 residues: UDP-N-acetylmuramoylalanine--D-glutamate ligase (451 aa).

120-126 (GSNGKTT) is a binding site for ATP.

Belongs to the MurCDEF family.

Its subcellular location is the cytoplasm. The enzyme catalyses UDP-N-acetyl-alpha-D-muramoyl-L-alanine + D-glutamate + ATP = UDP-N-acetyl-alpha-D-muramoyl-L-alanyl-D-glutamate + ADP + phosphate + H(+). The protein operates within cell wall biogenesis; peptidoglycan biosynthesis. Its function is as follows. Cell wall formation. Catalyzes the addition of glutamate to the nucleotide precursor UDP-N-acetylmuramoyl-L-alanine (UMA). The protein is UDP-N-acetylmuramoylalanine--D-glutamate ligase of Bacillus velezensis (strain DSM 23117 / BGSC 10A6 / LMG 26770 / FZB42) (Bacillus amyloliquefaciens subsp. plantarum).